A 662-amino-acid chain; its full sequence is UvrABC system protein B (662 aa).

Residues 25–182 form the Helicase ATP-binding domain; the sequence is KGIEKGEKFQ…KKLVEIQYER (158 aa). Position 38-45 (38-45) interacts with ATP; sequence GVTGSGKT. The Beta-hairpin signature appears at 91-114; sequence YYDYYQPEAYVAQSDTYIEKDASI. Residues 429-595 form the Helicase C-terminal domain; it reads QIDDLYTSIQ…TIIKDIREVI (167 aa). The UVR domain occupies 622 to 657; sequence DKLIEKYEEEMREAAQNLQFEKAAHLRDVIYKLKRD.

Belongs to the UvrB family. Forms a heterotetramer with UvrA during the search for lesions. Interacts with UvrC in an incision complex.

It localises to the cytoplasm. Its function is as follows. The UvrABC repair system catalyzes the recognition and processing of DNA lesions. A damage recognition complex composed of 2 UvrA and 2 UvrB subunits scans DNA for abnormalities. Upon binding of the UvrA(2)B(2) complex to a putative damaged site, the DNA wraps around one UvrB monomer. DNA wrap is dependent on ATP binding by UvrB and probably causes local melting of the DNA helix, facilitating insertion of UvrB beta-hairpin between the DNA strands. Then UvrB probes one DNA strand for the presence of a lesion. If a lesion is found the UvrA subunits dissociate and the UvrB-DNA preincision complex is formed. This complex is subsequently bound by UvrC and the second UvrB is released. If no lesion is found, the DNA wraps around the other UvrB subunit that will check the other stand for damage. The polypeptide is UvrABC system protein B (Clostridium botulinum (strain 657 / Type Ba4)).